Here is a 132-residue protein sequence, read N- to C-terminus: L-ectoine synthase (132 aa).

This sequence belongs to the ectoine synthase family.

It carries out the reaction (2S)-4-acetamido-2-aminobutanoate = L-ectoine + H2O. It participates in amine and polyamine biosynthesis; ectoine biosynthesis; L-ectoine from L-aspartate 4-semialdehyde: step 3/3. Its function is as follows. Catalyzes the circularization of gamma-N-acetyl-alpha,gamma-diaminobutyric acid (ADABA) to ectoine (1,4,5,6-tetrahydro-2-methyl-4-pyrimidine carboxylic acid), which is an excellent osmoprotectant. The protein is L-ectoine synthase of Rhodococcus erythropolis (strain PR4 / NBRC 100887).